Here is a 119-residue protein sequence, read N- to C-terminus: Acidic phospholipase A2 DE-III (119 aa).

Intrachain disulfides connect cysteine 11–cysteine 72, cysteine 26–cysteine 118, cysteine 28–cysteine 44, cysteine 43–cysteine 99, cysteine 50–cysteine 92, cysteine 60–cysteine 85, and cysteine 79–cysteine 90. Ca(2+)-binding residues include tyrosine 27, glycine 29, and glycine 31. Histidine 47 is an active-site residue. A Ca(2+)-binding site is contributed by aspartate 48. Residue aspartate 93 is part of the active site.

The protein belongs to the phospholipase A2 family. Group I subfamily. D49 sub-subfamily. Requires Ca(2+) as cofactor. As to expression, expressed by the venom gland.

It localises to the secreted. The enzyme catalyses a 1,2-diacyl-sn-glycero-3-phosphocholine + H2O = a 1-acyl-sn-glycero-3-phosphocholine + a fatty acid + H(+). PLA2 catalyzes the calcium-dependent hydrolysis of the 2-acyl groups in 3-sn-phosphoglycerides. This Naja melanoleuca (Forest cobra) protein is Acidic phospholipase A2 DE-III.